The following is a 439-amino-acid chain: Cysteine--tRNA ligase (439 aa).

Position 28 (Cys28) interacts with Zn(2+). A 'HIGH' region motif is present at residues 30-40 (ITVYDLCHIGH). Residues Cys209, His234, and Glu238 each contribute to the Zn(2+) site. The 'KMSKS' region signature appears at 266-270 (KMSKS). Lys269 provides a ligand contact to ATP.

The protein belongs to the class-I aminoacyl-tRNA synthetase family. As to quaternary structure, monomer. Zn(2+) serves as cofactor.

Its subcellular location is the cytoplasm. It carries out the reaction tRNA(Cys) + L-cysteine + ATP = L-cysteinyl-tRNA(Cys) + AMP + diphosphate. This chain is Cysteine--tRNA ligase, found in Shigella boydii serotype 4 (strain Sb227).